We begin with the raw amino-acid sequence, 156 residues long: Small ribosomal subunit protein uS7 (156 aa).

This sequence belongs to the universal ribosomal protein uS7 family. Part of the 30S ribosomal subunit. Contacts proteins S9 and S11.

Its function is as follows. One of the primary rRNA binding proteins, it binds directly to 16S rRNA where it nucleates assembly of the head domain of the 30S subunit. Is located at the subunit interface close to the decoding center, probably blocks exit of the E-site tRNA. In Nitrosospira multiformis (strain ATCC 25196 / NCIMB 11849 / C 71), this protein is Small ribosomal subunit protein uS7.